An 89-amino-acid chain; its full sequence is OMEGA-ectatommitoxin(02)-Rm1a (89 aa).

An N-terminal signal peptide occupies residues 1–30; that stretch reads MKDSYISIVIAYLMVTFILVSSMPIEGEKG. 3 disulfide bridges follow: Cys39–Cys52, Cys47–Cys68, and Cys70–Cys79. Residues 43 to 80 enclose the EGF-like domain; the sequence is YANYCFNGKCVHVVAQDEPGKPCYSCICDKFYIGKRCG.

This sequence belongs to the EGF domain peptide family. Expressed by the venom gland.

Its subcellular location is the secreted. Ant peptide with probable defensive activity which acts as a potent agonist of the mammalian epidermal growth factor receptor (EGFR). Mimics, both structurally and functionally, vertebrate epidermal growth factor (EGF) peptide hormones. In vivo, intraplantar injection in mice causes long-lasting (several days) hypersensitivity of the injected paw to both mechanical and thermal stimuli. Its long-lasting effect is unusual for venom toxins whose effects are usually immediate. One possible explanation is that it would reduce the duration of a nest attack, discourage future attacks, or enhance the actions of subsequent exposure to other pain-inducing venom peptides. In Rhytidoponera metallica (Australian green-headed ant), this protein is OMEGA-ectatommitoxin(02)-Rm1a.